Consider the following 483-residue polypeptide: Isocitrate dehydrogenase [NADP] (483 aa).

Thr-74 is a binding site for NADP(+). Residues Ser-83, Asn-85, Arg-89, Arg-99, and Arg-121 each contribute to the D-threo-isocitrate site. Residue Asp-232 participates in Mg(2+) binding. Residues His-264–Ile-270 and Asn-277 each bind NADP(+).

The protein belongs to the isocitrate and isopropylmalate dehydrogenases family. Homodimer. Requires Mg(2+) as cofactor. It depends on Mn(2+) as a cofactor.

It catalyses the reaction D-threo-isocitrate + NADP(+) = 2-oxoglutarate + CO2 + NADPH. Catalyzes the oxidative decarboxylation of isocitrate to 2-oxoglutarate and carbon dioxide with the concomitant reduction of NADP(+). The chain is Isocitrate dehydrogenase [NADP] (icd) from Rickettsia conorii (strain ATCC VR-613 / Malish 7).